A 209-amino-acid polypeptide reads, in one-letter code: Large ribosomal subunit protein uL3 (209 aa).

The protein belongs to the universal ribosomal protein uL3 family. In terms of assembly, part of the 50S ribosomal subunit. Forms a cluster with proteins L14 and L19.

One of the primary rRNA binding proteins, it binds directly near the 3'-end of the 23S rRNA, where it nucleates assembly of the 50S subunit. The protein is Large ribosomal subunit protein uL3 of Moorella thermoacetica (strain ATCC 39073 / JCM 9320).